We begin with the raw amino-acid sequence, 613 residues long: DNA repair and telomere maintenance protein nbs1 (613 aa).

One can recognise an FHA domain in the interval 23–86; it reads YIVGRNVSDD…FGTKVNEKVV (64 aa). 2 consecutive BRCT domains span residues 107 to 186 and 228 to 302; these read FTIN…YLST and GFSC…KIII. Ser355 is modified (phosphoserine). Disordered regions lie at residues 381–428 and 546–613; these read KEPE…GQGK and TEVF…KFHF. The span at 387–399 shows a compositional bias: polar residues; sequence LSNQSNNGSAQNK. Over residues 400–409 the composition is skewed to basic and acidic residues; it reads KSGDNSEKTK. Residues 574–592 are compositionally biased toward low complexity; the sequence is SSDKSGKSSISKKSSNSFK. Positions 611 to 613 match the FxF/Y motif motif; sequence FHF.

This sequence belongs to the Nibrin family. Component of the MRN complex composed of two heterodimers rad32 and rad50 associated with a single nbs1. Interacts with (phosphorylated) ctp1/CtIP. Interacts (via FxF/Y motif) with tel1/atm.

The protein localises to the nucleus. Its subcellular location is the chromosome. It is found in the telomere. Component of the MRN complex, which plays a central role in double-strand break (DSB) repair, DNA recombination, maintenance of telomere integrity and meiosis. The MRN complex is involved in the repair of DNA double-strand breaks (DSBs) via homologous recombination (HR), an error-free mechanism which primarily occurs during S and G2 phases. The complex (1) mediates the end resection of damaged DNA, which generates proper single-stranded DNA, a key initial steps in HR, and is (2) required for the recruitment of other repair factors and efficient activation of tel1/atm upon DNA damage. The MRN complex possesses single-strand endonuclease activity and double-strand-specific 3'-5' exonuclease activity, which are provided by MRE11, to initiate end resection, which is required for single-strand invasion and recombination. Within the MRN complex, nbs1 acts as a protein-protein adapter, which specifically recognizes and binds phosphorylated proteins, promoting their recruitment to DNA damage sites. Recruits rad32 and rad50 components of the MRN complex to DSBs in response to DNA damage. Promotes the recruitment of tel1/atm to the DNA damage sites, activating tel1/atm function. Mediates the recruitment of phosphorylated ctp1/CtIP to DSBs, leading to cooperation between the MRN complex and ctp1/CtIP to initiate end resection. The chain is DNA repair and telomere maintenance protein nbs1 from Schizosaccharomyces pombe (strain 972 / ATCC 24843) (Fission yeast).